The primary structure comprises 361 residues: Chorismate synthase (361 aa).

Positions 48 and 54 each coordinate NADP(+). Residues 125-127 (RSS), 238-239 (NA), G278, 293-297 (KPTSS), and R319 each bind FMN.

Belongs to the chorismate synthase family. In terms of assembly, homotetramer. FMNH2 serves as cofactor.

It catalyses the reaction 5-O-(1-carboxyvinyl)-3-phosphoshikimate = chorismate + phosphate. It functions in the pathway metabolic intermediate biosynthesis; chorismate biosynthesis; chorismate from D-erythrose 4-phosphate and phosphoenolpyruvate: step 7/7. Catalyzes the anti-1,4-elimination of the C-3 phosphate and the C-6 proR hydrogen from 5-enolpyruvylshikimate-3-phosphate (EPSP) to yield chorismate, which is the branch point compound that serves as the starting substrate for the three terminal pathways of aromatic amino acid biosynthesis. This reaction introduces a second double bond into the aromatic ring system. In Escherichia coli O1:K1 / APEC, this protein is Chorismate synthase.